The following is a 581-amino-acid chain: Crossover junction endonuclease MUS81 (581 aa).

Residues 76 to 113 form a disordered region; the sequence is EQNGLPMPPHPRSRKAAPVTSDENGEGSSKPAKKARKQ. Positions 290–396 constitute an ERCC4 domain; sequence QLVLDVREVR…KVIYIIEEIG (107 aa).

It belongs to the XPF family. In terms of assembly, interacts with EME1. Requires Mg(2+) as cofactor.

It localises to the nucleus. In terms of biological role, interacts with EME1 to form a DNA structure-specific endonuclease with substrate preference for branched DNA structures with a 5'-end at the branch nick. Typical substrates include 3'-flap structures, D-loops, replication forks and nicked Holliday junctions. May be required in mitosis for the processing of stalled or collapsed replication fork intermediates. May be required in meiosis for the repair of meiosis-specific double strand breaks subsequent to single-end invasion (SEI). The polypeptide is Crossover junction endonuclease MUS81 (MUS81) (Gibberella zeae (strain ATCC MYA-4620 / CBS 123657 / FGSC 9075 / NRRL 31084 / PH-1) (Wheat head blight fungus)).